Consider the following 444-residue polypeptide: Tol-Pal system protein TolB (444 aa).

An N-terminal signal peptide occupies residues 1 to 19 (MRNIIYFILSLLFSVTSYA).

This sequence belongs to the TolB family. As to quaternary structure, the Tol-Pal system is composed of five core proteins: the inner membrane proteins TolA, TolQ and TolR, the periplasmic protein TolB and the outer membrane protein Pal. They form a network linking the inner and outer membranes and the peptidoglycan layer.

The protein resides in the periplasm. Functionally, part of the Tol-Pal system, which plays a role in outer membrane invagination during cell division and is important for maintaining outer membrane integrity. This is Tol-Pal system protein TolB from Rickettsia rickettsii (strain Iowa).